The sequence spans 516 residues: MNYIKAGKWLTVFLTFLGILLFIDLFPKEEHDQKTKSKQKPDYRAAYHFTTPDKWKNDPQKPIYFDGKYHYFYLYNRDYPKGNGTEWRHAVSEDLVHWTDEGVAIPKYTNPDGDIWTGSVVVDKENTAGFGKNALVAIVTQPSAKDKKQEQYLWYSTDKGKSFKFYSGNPVMPNPGTDDFRDPKVIWDDQDNKWVMVMAEGSKIGFYESDNLKDWHYTSGFFPEQAGMVECPDLYMMRASDGTNKWVLGASANGKPWGKPNTYAYWTGSFDGKEFKADQTEAQWLDYGFDWYGGVTFEDSKSTDPLEKRYALAWMNNWDYANNTPTMKNGFNGTDSVIRELRLKEQDGTYSLVSQPIEALEQLTVSTDEIEDQDVNGSKTLSITGDTYQLDTDLSWSELKNAGVRLRESEDQKRHIDVGIFAEGGYAYVNRAATNQPDKSNTYVESKAPYDVNKRKVHLKILVDKTTIEVFVGDGKTVFSNEVFPKPEDKGITLYSDGGTASFKNITVKHFDSIHE.

The Cytoplasmic segment spans residues 1 to 5; it reads MNYIK. A helical membrane pass occupies residues 6 to 26; the sequence is AGKWLTVFLTFLGILLFIDLF. Over 27-516 the chain is Extracellular; the sequence is PKEEHDQKTK…TVKHFDSIHE (490 aa). Substrate is bound by residues 55 to 58, 116 to 117, 181 to 182, Glu230, and Trp318; these read WKND, WT, and RD. Residue Asp58 is part of the active site.

The protein belongs to the glycosyl hydrolase 32 family.

It localises to the cell membrane. It carries out the reaction Hydrolysis of (2-&gt;6)-beta-D-fructofuranan, to remove successive disaccharide residues as levanbiose, i.e. 6-(beta-D-fructofuranosyl)-D-fructose, from the end of the chain.. Functionally, catalyzes the degradation of levan mainly into levanbiose (difructose). Is not active on sucrose. The sequence is that of Levanbiose-producing levanase (levB) from Bacillus subtilis (strain 168).